Consider the following 1687-residue polypeptide: Brefeldin A-inhibited guanine nucleotide-exchange protein 1 (1687 aa).

Residues 494–529 are disordered; the sequence is SLENEAPANNHSNSNEEDGTTIDHDFHPDLNPESSD. A compositionally biased stretch (basic and acidic residues) spans 514–523; that stretch reads TIDHDFHPDL. Residues 532–719 form the SEC7 domain; that stretch reads TLEQRRAYKI…GALYDQVVIN (188 aa). Glu634 is an active-site residue. Residues 1229–1248 are disordered; that stretch reads KGRSSSPSTPVTDDHSPSTQ. Over residues 1232–1248 the composition is skewed to polar residues; that stretch reads SSSPSTPVTDDHSPSTQ.

As to quaternary structure, homodimer.

The protein resides in the cytoplasm. It localises to the cytosol. Its subcellular location is the membrane. Inhibited by brefeldin A. In terms of biological role, activates the ARF proteins by exchanging bound GDP for free GTP. Plays a role in vesicular protein sorting. The sequence is that of Brefeldin A-inhibited guanine nucleotide-exchange protein 1 (BIG1) from Arabidopsis thaliana (Mouse-ear cress).